The chain runs to 445 residues: Phosphoglucosamine mutase (445 aa).

Catalysis depends on S102, which acts as the Phosphoserine intermediate. Mg(2+) contacts are provided by S102, D241, D243, and D245. S102 is modified (phosphoserine).

This sequence belongs to the phosphohexose mutase family. The cofactor is Mg(2+). In terms of processing, activated by phosphorylation.

The catalysed reaction is alpha-D-glucosamine 1-phosphate = D-glucosamine 6-phosphate. Functionally, catalyzes the conversion of glucosamine-6-phosphate to glucosamine-1-phosphate. This is Phosphoglucosamine mutase from Shewanella halifaxensis (strain HAW-EB4).